The following is a 276-amino-acid chain: Ribosomal RNA small subunit methyltransferase A (276 aa).

The S-adenosyl-L-methionine site is built by Asn-27, Leu-29, Gly-54, Glu-75, Asp-101, and Asn-123.

This sequence belongs to the class I-like SAM-binding methyltransferase superfamily. rRNA adenine N(6)-methyltransferase family. RsmA subfamily.

Its subcellular location is the cytoplasm. It catalyses the reaction adenosine(1518)/adenosine(1519) in 16S rRNA + 4 S-adenosyl-L-methionine = N(6)-dimethyladenosine(1518)/N(6)-dimethyladenosine(1519) in 16S rRNA + 4 S-adenosyl-L-homocysteine + 4 H(+). Specifically dimethylates two adjacent adenosines (A1518 and A1519) in the loop of a conserved hairpin near the 3'-end of 16S rRNA in the 30S particle. May play a critical role in biogenesis of 30S subunits. The sequence is that of Ribosomal RNA small subunit methyltransferase A from Bartonella henselae (strain ATCC 49882 / DSM 28221 / CCUG 30454 / Houston 1) (Rochalimaea henselae).